A 353-amino-acid chain; its full sequence is MKKTAIALAVALVGFATVAQAAPKDNTWYTGGKLGWSQYQDTGSIINNDGPTHKDQLGAGAFFGYQANQYLGFEMGYDWLGRMPYKGDINNGAFKAQGVQLAAKLSYPVAQDLDVYTRLGGLVWRADAKGSFDGGLDRASGHDTGVSPLVALGAEYAWTKNWATRMEYQWVNNIGDRETVGARPDNGLLSVGVSYRFGQEDAAAPIVAPTPAPAPIVDTKRFTLKSDVLFGFNKANLKPEGQQALDQLYAQLSSIDPKDGSVVVLGFADRIGQPAPNLALSQRRADSVRDYLVSKGIPADKITARGEGQANPVTGNTCDNVKPRAALIECLAPDRRVEIEVKGYKEVVTQPQA.

A signal peptide spans 1 to 21 (MKKTAIALAVALVGFATVAQA). 8 beta stranded membrane-spanning segments follow: residues 27–37 (TWYTGGKLGWS), 56–67 (QLGAGAFFGYQA), 71–79 (LGFEMGYDW), 97–108 (QGVQLAAKLSYP), 113–121 (LDVYTRLGG), 148–157 (PLVALGAEYA), 162–169 (WATRMEYQ), and 188–196 (LLSVGVSYR). 4 repeat units span residues 208 to 209 (AP), 210 to 211 (TP), 212 to 213 (AP), and 214 to 215 (AP). Residues 208-215 (APTPAPAP) form a 4 X 2 AA approximate tandem repeats of A-P region. Positions 217–345 (VDTKRFTLKS…RVEIEVKGYK (129 aa)) constitute an OmpA-like domain. A disulfide bridge links C318 with C330.

Belongs to the outer membrane OOP (TC 1.B.6) superfamily. OmpA family. As to quaternary structure, monomer and homodimer.

It localises to the cell outer membrane. Functionally, with TolR probably plays a role in maintaining the position of the peptidoglycan cell wall in the periplasm. Acts as a porin with low permeability that allows slow penetration of small solutes; an internal gate slows down solute passage. The chain is Outer membrane protein A from Yersinia pseudotuberculosis serotype I (strain IP32953).